Consider the following 348-residue polypeptide: Dihydroorotase (348 aa).

Positions 14 and 16 each coordinate Zn(2+). Substrate is bound by residues 16–18 (HLR) and asparagine 42. Zn(2+)-binding residues include lysine 100, histidine 137, and histidine 175. Lysine 100 bears the N6-carboxylysine mark. Position 137 (histidine 137) interacts with substrate. Leucine 220 contributes to the substrate binding site. Residue aspartate 248 coordinates Zn(2+). Aspartate 248 is a catalytic residue. 2 residues coordinate substrate: histidine 252 and alanine 264.

This sequence belongs to the metallo-dependent hydrolases superfamily. DHOase family. Class II DHOase subfamily. As to quaternary structure, homodimer. It depends on Zn(2+) as a cofactor.

It catalyses the reaction (S)-dihydroorotate + H2O = N-carbamoyl-L-aspartate + H(+). Its pathway is pyrimidine metabolism; UMP biosynthesis via de novo pathway; (S)-dihydroorotate from bicarbonate: step 3/3. Functionally, catalyzes the reversible cyclization of carbamoyl aspartate to dihydroorotate. The sequence is that of Dihydroorotase from Ectopseudomonas mendocina (strain ymp) (Pseudomonas mendocina).